The chain runs to 462 residues: Cleavage and polyadenylation specificity factor subunit 7 (462 aa).

Disordered regions lie at residues 34–68 (VLTA…NKTP) and 161–213 (TRQN…PSVL). Residues 50–62 (EPPPPVRQEPAPK) are compositionally biased toward pro residues. The 81-residue stretch at 82–162 (AAVYVGSFSW…EKVDVRPATR (81 aa)) folds into the RRM domain. The span at 181–190 (HSRDSSDSAD) shows a compositional bias: basic and acidic residues. Thr194 carries the phosphothreonine modification. Ser196 bears the Phosphoserine mark. Lys345 is covalently cross-linked (Glycyl lysine isopeptide (Lys-Gly) (interchain with G-Cter in SUMO2)). The interval 400–462 (SVGASGSSSR…HRDRERDRHH (63 aa)) is disordered. 2 positions are modified to phosphoserine: Ser404 and Ser414. The arg/Ser-rich domain stretch occupies residues 409–460 (RKRHRSRERSPSRSRESSRRHRDLLHNEDRHDDYFQERNREHERHRDRERDR). Composition is skewed to basic and acidic residues over residues 416–425 (ERSPSRSRES) and 432–462 (LLHN…DRHH).

This sequence belongs to the RRM CPSF6/7 family. As to quaternary structure, component of the cleavage factor Im (CFIm) complex which is a heterotetramer composed of two subunits of NUDT21/CPSF5 and two subunits of CPSF6 or CPSF7 or a heterodimer of CPSF6 and CPSF7. The cleavage factor Im (CFIm) complex associates with the CPSF and CSTF complexes to promote the assembly of the core mRNA 3'-processing machinery. Interacts with NUDT21/CPSF5. Interacts (via Arg/Ser-rich domain) with FIP1L1 (preferentially via unphosphorylated form and Arg/Glu/Asp-rich region); this interaction mediates, at least in part, the interaction between the CFIm and CPSF complexes and may be inhibited by CPSF7 hyper-phosphorylation. In terms of processing, phosphorylated. Asymmetrically dimethylated on arginine residues by PRMT1.

The protein resides in the nucleus. Its subcellular location is the cytoplasm. Its function is as follows. Component of the cleavage factor Im (CFIm) complex that functions as an activator of the pre-mRNA 3'-end cleavage and polyadenylation processing required for the maturation of pre-mRNA into functional mRNAs. CFIm contributes to the recruitment of multiprotein complexes on specific sequences on the pre-mRNA 3'-end, so called cleavage and polyadenylation signals (pA signals). Most pre-mRNAs contain multiple pA signals, resulting in alternative cleavage and polyadenylation (APA) producing mRNAs with variable 3'-end formation. The CFIm complex acts as a key regulator of cleavage and polyadenylation site choice during APA through its binding to 5'-UGUA-3' elements localized in the 3'-untranslated region (UTR) for a huge number of pre-mRNAs. CPSF7 activates directly the mRNA 3'-processing machinery. Binds to pA signals in RNA substrates. In Rattus norvegicus (Rat), this protein is Cleavage and polyadenylation specificity factor subunit 7.